A 472-amino-acid polypeptide reads, in one-letter code: ATP-dependent rRNA helicase rrp3 (472 aa).

A disordered region spans residues 1–52; sequence MPAIKKRKIAREAPQQEDHSDSEAHSSASEDAAPNTTEQEQEPSEAPKQAPK. The span at 10 to 24 shows a compositional bias: basic and acidic residues; it reads AREAPQQEDHSDSEA. Residues 52–80 carry the Q motif motif; that stretch reads KSFKELGLIEQLCEACDSMGYKAPTAIQA. Residues 83-254 enclose the Helicase ATP-binding domain; sequence IPLALQGRDL…RASLQNPLRV (172 aa). 96 to 103 lines the ATP pocket; it reads AETGSGKT. The DEAD box motif lies at 202–205; sequence DEAD. Positions 282-426 constitute a Helicase C-terminal domain; that stretch reads YLVYLLNEFV…EYPAEKDEVM (145 aa). The segment at 443–472 is disordered; sequence MKNYDEKKGSRGKKFAKGKRSREDMDQEEG. A compositionally biased stretch (basic residues) spans 452–462; the sequence is SRGKKFAKGKR.

Belongs to the DEAD box helicase family. DDX47/RRP3 subfamily. As to quaternary structure, interacts with the SSU processome.

Its subcellular location is the nucleus. It catalyses the reaction ATP + H2O = ADP + phosphate + H(+). Its function is as follows. ATP-dependent rRNA helicase required for pre-ribosomal RNA processing. Involved in the maturation of the 35S-pre-rRNA and to its cleavage to mature 18S rRNA. This is ATP-dependent rRNA helicase rrp3 from Aspergillus oryzae (strain ATCC 42149 / RIB 40) (Yellow koji mold).